We begin with the raw amino-acid sequence, 119 residues long: Ribonuclease P protein component (119 aa).

It belongs to the RnpA family. In terms of assembly, consists of a catalytic RNA component (M1 or rnpB) and a protein subunit.

The catalysed reaction is Endonucleolytic cleavage of RNA, removing 5'-extranucleotides from tRNA precursor.. RNaseP catalyzes the removal of the 5'-leader sequence from pre-tRNA to produce the mature 5'-terminus. It can also cleave other RNA substrates such as 4.5S RNA. The protein component plays an auxiliary but essential role in vivo by binding to the 5'-leader sequence and broadening the substrate specificity of the ribozyme. This chain is Ribonuclease P protein component, found in Edwardsiella ictaluri (strain 93-146).